A 369-amino-acid chain; its full sequence is Histidinol-phosphate aminotransferase (369 aa).

Lys-223 carries the N6-(pyridoxal phosphate)lysine modification.

This sequence belongs to the class-II pyridoxal-phosphate-dependent aminotransferase family. Histidinol-phosphate aminotransferase subfamily. In terms of assembly, homodimer. It depends on pyridoxal 5'-phosphate as a cofactor.

It carries out the reaction L-histidinol phosphate + 2-oxoglutarate = 3-(imidazol-4-yl)-2-oxopropyl phosphate + L-glutamate. It functions in the pathway amino-acid biosynthesis; L-histidine biosynthesis; L-histidine from 5-phospho-alpha-D-ribose 1-diphosphate: step 7/9. The sequence is that of Histidinol-phosphate aminotransferase from Shouchella clausii (strain KSM-K16) (Alkalihalobacillus clausii).